Reading from the N-terminus, the 183-residue chain is UPF0397 protein stu0306/stu0307 (183 aa).

5 consecutive transmembrane segments (helical) span residues 11–31 (ATGI…IPIF), 44–64 (VLFS…GFIG), 74–94 (GDIS…IGLF), 111–131 (IWFN…VTPI), and 149–169 (FVAG…LLAI).

It belongs to the UPF0397 family.

It localises to the cell membrane. This is UPF0397 protein stu0306/stu0307 from Streptococcus thermophilus (strain ATCC BAA-250 / LMG 18311).